The sequence spans 507 residues: MELSPRAAELTNLFESRIRNFYANFQVDEIGRVVSVGDGIAQVYGLNEIQAGEMVLFANGVKGMALNLENENVGIVVFGGDTAIKEGDLVKRTGSIVDVPAGKAMLGRVVDAMGVPIDGKGALSDHEQRRVEVKAPGILERKSVHEPMQTGLKAVDSLVPIGRGQRELLIGDRQTGKTTIAIDTILNQKQINSRATSESETMYCVYVAIGQKRSTVGQLIQTLEEANALEYSILVAATASDPAPLQFLAPYSGCAMGEYFRDNGMHALIIYDDLSKQAVAYRQMSLLLRRPPGREAFPGDVFYLHSRLLERAAKRSDQTGAGSLTALPVIETQAGDVSAYIPTNVISITDGQICLETELFYRGIRPAINVGLSVSRVGSAAQLKAMKQVCGSLKLELAQYREVAAFAQFGSDLDAATQALLNRGARLTEVLKQPQYAPLPIEKQILVIYAAVNGFCDRMPLDRISQYEKAILNSVKPELLQALKGGLTNERKMELDAFLKERALALI.

G171–T178 serves as a coordination point for ATP.

This sequence belongs to the ATPase alpha/beta chains family. In terms of assembly, F-type ATPases have 2 components, CF(1) - the catalytic core - and CF(0) - the membrane proton channel. CF(1) has five subunits: alpha(3), beta(3), gamma(1), delta(1), epsilon(1). CF(0) has three main subunits: a, b and c.

The protein localises to the mitochondrion. Its subcellular location is the mitochondrion inner membrane. In terms of biological role, mitochondrial membrane ATP synthase (F(1)F(0) ATP synthase or Complex V) produces ATP from ADP in the presence of a proton gradient across the membrane which is generated by electron transport complexes of the respiratory chain. F-type ATPases consist of two structural domains, F(1) - containing the extramembraneous catalytic core, and F(0) - containing the membrane proton channel, linked together by a central stalk and a peripheral stalk. During catalysis, ATP synthesis in the catalytic domain of F(1) is coupled via a rotary mechanism of the central stalk subunits to proton translocation. Subunits alpha and beta form the catalytic core in F(1). Rotation of the central stalk against the surrounding alpha(3)beta(3) subunits leads to hydrolysis of ATP in three separate catalytic sites on the beta subunits. Subunit alpha does not bear the catalytic high-affinity ATP-binding sites. This chain is ATP synthase subunit alpha, mitochondrial (ATPA), found in Arabidopsis thaliana (Mouse-ear cress).